The following is a 1017-amino-acid chain: Dopamine dehydroxylase (1017 aa).

The tat-type signal signal peptide spans Met-1–Ala-34. In terms of domain architecture, 4Fe-4S Mo/W bis-MGD-type spans Asp-45–Asp-103. [4Fe-4S] cluster is bound by residues Cys-53, Cys-56, Cys-61, and Cys-89. Lys-91 acts as the Electron donor/acceptor in catalysis.

It belongs to the prokaryotic molybdopterin-containing oxidoreductase family. The cofactor is [4Fe-4S] cluster. Mo-bis(molybdopterin guanine dinucleotide) serves as cofactor. Predicted to be exported by the Tat system. The position of the signal peptide cleavage has not been experimentally proven.

The enzyme catalyses dopamine + AH2 = 3-tyramine + A + H2O. In terms of biological role, involved in drug metabolism, as part of an interspecies gut bacterial pathway for Levodopa (L-dopa) metabolism, acting on dopamine produced by Enterecoccus L-dopa decarboxylase. Removes the para hydroxyl group of dopamine to produce m-tyramine (3-tyramine). It is possible that dopamine dehydroxylation influences the multiple side effects of L-dopa administration linked to dopamine production in the treatment of Parkinson's disease. The polypeptide is Dopamine dehydroxylase (Eggerthella lenta (Eubacterium lentum)).